A 336-amino-acid polypeptide reads, in one-letter code: Ribosomal RNA small subunit methyltransferase C (336 aa).

The protein belongs to the methyltransferase superfamily. RsmC family. Monomer.

Its subcellular location is the cytoplasm. It carries out the reaction guanosine(1207) in 16S rRNA + S-adenosyl-L-methionine = N(2)-methylguanosine(1207) in 16S rRNA + S-adenosyl-L-homocysteine + H(+). In terms of biological role, specifically methylates the guanine in position 1207 of 16S rRNA in the 30S particle. The protein is Ribosomal RNA small subunit methyltransferase C of Buchnera aphidicola subsp. Schizaphis graminum (strain Sg).